A 172-amino-acid polypeptide reads, in one-letter code: Biogenesis of lysosome-related organelles complex 1 subunit 6 (172 aa).

Disordered stretches follow at residues 1–36 (MSVPGPSSPDGALTRPPYCLEAGEPTPGLSDTSPDE) and 135–172 (RALKLQQKRQKEELEREQQREKEFEREKQLTARPAKRM). Residues 63–167 (DLQRSKQALQ…FEREKQLTAR (105 aa)) are a coiled coil. The span at 143–164 (RQKEELEREQQREKEFEREKQL) shows a compositional bias: basic and acidic residues.

This sequence belongs to the BLOC1S6 family. As to quaternary structure, interacts with BLOC1S4 and DTNBP1/BLOC1S7. Homodimer. Component of the biogenesis of lysosome-related organelles complex 1 (BLOC-1) composed of BLOC1S1, BLOC1S2, BLOC1S3, BLOC1S4, BLOC1S5, BLOC1S6, DTNBP1/BLOC1S7 and SNAPIN/BLOC1S8. Octamer composed of one copy each BLOC1S1, BLOC1S2, BLOC1S3, BLOC1S4, BLOC1S5, BLOC1S6, DTNBP1/BLOC1S7 and SNAPIN/BLOC1S8. The BLOC-1 complex associates with the AP-3 protein complex and membrane protein cargos. Interacts with BLOC1S5, F-actin, SNAP25 isoform 1 and isoform 2, SNAP47 and STX12. Phosphorylated. Widely expressed.

It is found in the cytoplasm. It localises to the membrane. In terms of biological role, component of the BLOC-1 complex, a complex that is required for normal biogenesis of lysosome-related organelles (LRO), such as platelet dense granules and melanosomes. In concert with the AP-3 complex, the BLOC-1 complex is required to target membrane protein cargos into vesicles assembled at cell bodies for delivery into neurites and nerve terminals. The BLOC-1 complex, in association with SNARE proteins, is also proposed to be involved in neurite extension. May play a role in intracellular vesicle trafficking, particularly in the vesicle-docking and fusion process. The polypeptide is Biogenesis of lysosome-related organelles complex 1 subunit 6 (BLOC1S6) (Homo sapiens (Human)).